The sequence spans 208 residues: Ribosomal RNA small subunit methyltransferase G (208 aa).

S-adenosyl-L-methionine is bound by residues Gly-74, Leu-79, 125-126 (VE), and Arg-140.

This sequence belongs to the methyltransferase superfamily. RNA methyltransferase RsmG family.

Its subcellular location is the cytoplasm. It catalyses the reaction guanosine(527) in 16S rRNA + S-adenosyl-L-methionine = N(7)-methylguanosine(527) in 16S rRNA + S-adenosyl-L-homocysteine. In terms of biological role, specifically methylates the N7 position of guanine in position 527 of 16S rRNA. The protein is Ribosomal RNA small subunit methyltransferase G of Shewanella denitrificans (strain OS217 / ATCC BAA-1090 / DSM 15013).